We begin with the raw amino-acid sequence, 734 residues long: ATP-dependent RNA helicase DDX50 (734 aa).

The disordered stretch occupies residues 1-131 (MPGKLLWGDI…KAEETLTREQ (131 aa)). Over residues 11 to 20 (MELEAPLEES) the composition is skewed to acidic residues. Composition is skewed to basic and acidic residues over residues 38-51 (HSES…RENG) and 67-86 (REKL…EFSP). Residues S41, S81, S85, S113, S119, and S120 each carry the phosphoserine modification. Positions 115 to 131 (NSHKSSDKAEETLTREQ) are enriched in basic and acidic residues. K122 participates in a covalent cross-link: Glycyl lysine isopeptide (Lys-Gly) (interchain with G-Cter in SUMO2). The short motif at 134–162 (GAFSNFSISEETIKLLKGRGVTYLFPIQV) is the Q motif element. The region spanning 165–344 (FGPVYEGKDL…KKYMKSRYEQ (180 aa)) is the Helicase ATP-binding domain. Residue 178–185 (ARTGTGKT) participates in ATP binding. At T244 the chain carries Phosphothreonine. A DEVD box motif is present at residues 287–290 (DEVD). One can recognise a Helicase C-terminal domain in the interval 377–521 (DVLQVYSGSE…GVPSTMDLVK (145 aa)). Phosphoserine is present on S515. The segment at 664–734 (YYDGNTSSNP…RSGGHKRNFD (71 aa)) is disordered. Residues 679-698 (WSGGRSGRSGRSGGRSGGRS) show a composition bias toward gly residues. The span at 699–709 (GRQSRQGSRSG) shows a compositional bias: low complexity. Over residues 717 to 734 (RSGNRNRSRSGGHKRNFD) the composition is skewed to basic residues.

This sequence belongs to the DEAD box helicase family. DDX21/DDX50 subfamily. In terms of assembly, interacts with C1QBP. Interacts with the ubiquitin ligase CTLH complex through GID4. Interacts with TICAM1.

The protein resides in the nucleus. The protein localises to the nucleolus. It is found in the cytoplasm. It carries out the reaction ATP + H2O = ADP + phosphate + H(+). Its function is as follows. ATP-dependent RNA helicase that may play a role in various aspects of RNA metabolism including pre-mRNA splicing or ribosomal RNA production. Also acts as a viral restriction factor and promotes the activation of the NF-kappa-B and IRF3 signaling pathways following its stimulation with viral RNA or infection with RNA and DNA viruses. For instance, decreases vaccinia virus, herpes simplex virus, Zika virus or dengue virus replication during the early stage of infection. Mechanistically, acts via the adapter TICAM1 and independently of the DDX1-DDX21-DHX36 helicase complex to induce the production of interferon-beta. This chain is ATP-dependent RNA helicase DDX50 (Ddx50), found in Mus musculus (Mouse).